The chain runs to 98 residues: Large ribosomal subunit protein uL23 (98 aa).

The protein belongs to the universal ribosomal protein uL23 family. As to quaternary structure, part of the 50S ribosomal subunit. Contacts protein L29, and trigger factor when it is bound to the ribosome.

One of the early assembly proteins it binds 23S rRNA. One of the proteins that surrounds the polypeptide exit tunnel on the outside of the ribosome. Forms the main docking site for trigger factor binding to the ribosome. In Clostridium beijerinckii (strain ATCC 51743 / NCIMB 8052) (Clostridium acetobutylicum), this protein is Large ribosomal subunit protein uL23.